The following is a 1368-amino-acid chain: Alpha-latrotoxin-Lg1a (1368 aa).

Positions 217–236 are helix H8 is the probable transmembrane region of the tetrameric pore inserted in the target cell membrane; sequence VLYAILYGTQTYVSVMFFLL. A disulfide bridge links Cys392 with Cys1044. ANK repeat units follow at residues 469–500, 504–533, 538–568, 572–601, 605–635, 639–669, 674–704, 708–737, 741–770, 774–803, 807–837, 841–870, 874–903, 907–936, 953–981, 982–1011, 1013–1042, 1046–1075, 1079–1109, and 1115–1144; these read QGRTVFHAAAKSGNDKIMIELTFFSKYTDINQ, KGYTPIHVAADSGNAGIVNLLIRSGISVNS, FLQTPLHLAAQRGFVATFQRLMESPEININE, DGFTPLHYAVRGGERILEAFINQAGIDVNV, KGLTPFHLAVIKNDWPVASTLLRSKKIDINA, NNMTALHYAAILGFLETTKQLINLKEINANA, GLLSALHYAILYKHDDVALFLLKSSKVNYNL, GDITPLHLAVMQGRKQVLSEMFNIGININQ, EKYTPLHLAAMSKYPELVEILLDQGSNLEA, TGATPLNLATFKGKSQAALILLKDEVNWRE, NGQMPIHGAAMNGLLDVAQAILYLDATVLDI, NLDTPLNLAAQNSHIDMVKYFIDLGAKVNT, KGQAPLLAFSKKGNLDMVKYLFDKNANVYI, DGLNFFYYAVRNGHLNIVKYAMSEKDKFEW, ISHFAVCDAVQYDKIEIVKYFVGTLGHYS, ICSPLHQAARYGHIHIVKYLVEEEVLSVDG, KPDTPLCYASENGHLAVVQYLIRNGAKVNH, NGMTAIDKAITKNQLQVVQILAENGVDFRR, LDATPFLTAVASNSYEIAEYLIREKRQNINI, and NKETALHLAVYYKNLQMIKLLVKYGIDENI. Residues 1174 to 1177 form a furin-like endopeptidase recognition region region; that stretch reads KFRR. The propeptide occupies 1178 to 1368; the sequence is EYKSSNGEHD…GETLHLFHES (191 aa).

Belongs to the cationic peptide 01 (latrotoxin) family. 03 (alpha-latrotoxin) subfamily. Homotetramer in membranes. In terms of tissue distribution, expressed in venom gland, cephalothorax, and abdomen tissues from both males and females.

The protein resides in the secreted. It is found in the target cell membrane. In terms of biological role, presynaptic neurotoxin that causes massive release of neurotransmitters from vertebrate (but not invertebrate) nerve terminals and endocrine cells via a complex mechanism involving activation of receptor(s) and toxin insertion into the plasma membrane with subsequent pore formation. Binds to neurexin-1-alpha (NRXN1) in a calcium dependent manner, adhesion G protein-coupled receptor L1 (ADGRL1, also termed latrophilin-1 and calcium-independent receptor of latrotoxin (CIRL)), and receptor-type tyrosine-protein phosphatase S (PTPRS), also termed PTP sigma. NRXN1 and PTPRS are suggested to provide a platform for binding and subsequent pore formation events. In contrast, binding to ADGRL1 does not involve oligomerization and channel formation, but direct downstream stimulation of the synaptic fusion machinery. The sequence is that of Alpha-latrotoxin-Lg1a from Latrodectus geometricus (Brown widow spider).